Consider the following 164-residue polypeptide: Protein phosphatase 1 regulatory subunit 14C (164 aa).

Over residues 1 to 19 the composition is skewed to gly residues; it reads MSVVTGGGEAAGGGGGGGA. The disordered stretch occupies residues 1–70; sequence MSVVTGGGEA…QQQRRHQQGK (70 aa). Ser2 carries the post-translational modification N-acetylserine. At Ser25 the chain carries Phosphoserine. Arg27 is subject to Omega-N-methylarginine. Ser33 carries the phosphoserine modification. The span at 50 to 62 shows a compositional bias: low complexity; that stretch reads VTTVAAAGQVQQQ. Thr72 carries the phosphothreonine; by ILK1 modification.

It belongs to the PP1 inhibitor family. Post-translationally, the main inhibitory site appears to be Thr-72. Has over 600-fold higher inhibitory activity when phosphorylated, creating a molecular switch for regulating the phosphorylation status of PPP1CA substrates and smooth muscle contraction. In terms of tissue distribution, detected in heart, muscle, spinal cord, hippocampus, hypothalamus, thalamus, midbrain, brain stem, cerebellum, brain cortex and olfactory bulb.

It is found in the endomembrane system. Functionally, inhibitor of the PP1 regulatory subunit PPP1CA. The protein is Protein phosphatase 1 regulatory subunit 14C (Ppp1r14c) of Mus musculus (Mouse).